A 420-amino-acid chain; its full sequence is L-rhamnose isomerase (420 aa).

The Mn(2+) site is built by His264, Asp296, and Asp298.

Belongs to the rhamnose isomerase family. Requires Mn(2+) as cofactor.

The protein resides in the cytoplasm. It carries out the reaction L-rhamnopyranose = L-rhamnulose. It participates in carbohydrate degradation; L-rhamnose degradation; glycerone phosphate from L-rhamnose: step 1/3. Catalyzes the interconversion of L-rhamnose and L-rhamnulose. The chain is L-rhamnose isomerase from Listeria monocytogenes serotype 4b (strain CLIP80459).